The primary structure comprises 227 residues: Cytochrome c oxidase subunit 2 (227 aa).

Residues M1–S14 are Mitochondrial intermembrane-facing. Residues P15 to M45 traverse the membrane as a helical segment. The Mitochondrial matrix segment spans residues L46–Q59. Residues E60 to M87 traverse the membrane as a helical segment. Over D88 to T227 the chain is Mitochondrial intermembrane. Cu cation contacts are provided by H161, C196, E198, C200, H204, and M207. Residue E198 participates in Mg(2+) binding.

The protein belongs to the cytochrome c oxidase subunit 2 family. In terms of assembly, component of the cytochrome c oxidase (complex IV, CIV), a multisubunit enzyme composed of 14 subunits. The complex is composed of a catalytic core of 3 subunits MT-CO1, MT-CO2 and MT-CO3, encoded in the mitochondrial DNA, and 11 supernumerary subunits COX4I, COX5A, COX5B, COX6A, COX6B, COX6C, COX7A, COX7B, COX7C, COX8 and NDUFA4, which are encoded in the nuclear genome. The complex exists as a monomer or a dimer and forms supercomplexes (SCs) in the inner mitochondrial membrane with NADH-ubiquinone oxidoreductase (complex I, CI) and ubiquinol-cytochrome c oxidoreductase (cytochrome b-c1 complex, complex III, CIII), resulting in different assemblies (supercomplex SCI(1)III(2)IV(1) and megacomplex MCI(2)III(2)IV(2)). Found in a complex with TMEM177, COA6, COX18, COX20, SCO1 and SCO2. Interacts with TMEM177 in a COX20-dependent manner. Interacts with COX20. Interacts with COX16. It depends on Cu cation as a cofactor.

The protein localises to the mitochondrion inner membrane. The catalysed reaction is 4 Fe(II)-[cytochrome c] + O2 + 8 H(+)(in) = 4 Fe(III)-[cytochrome c] + 2 H2O + 4 H(+)(out). Its function is as follows. Component of the cytochrome c oxidase, the last enzyme in the mitochondrial electron transport chain which drives oxidative phosphorylation. The respiratory chain contains 3 multisubunit complexes succinate dehydrogenase (complex II, CII), ubiquinol-cytochrome c oxidoreductase (cytochrome b-c1 complex, complex III, CIII) and cytochrome c oxidase (complex IV, CIV), that cooperate to transfer electrons derived from NADH and succinate to molecular oxygen, creating an electrochemical gradient over the inner membrane that drives transmembrane transport and the ATP synthase. Cytochrome c oxidase is the component of the respiratory chain that catalyzes the reduction of oxygen to water. Electrons originating from reduced cytochrome c in the intermembrane space (IMS) are transferred via the dinuclear copper A center (CU(A)) of subunit 2 and heme A of subunit 1 to the active site in subunit 1, a binuclear center (BNC) formed by heme A3 and copper B (CU(B)). The BNC reduces molecular oxygen to 2 water molecules using 4 electrons from cytochrome c in the IMS and 4 protons from the mitochondrial matrix. In Desmodillus auricularis (Cape short-eared gerbil), this protein is Cytochrome c oxidase subunit 2 (MT-CO2).